The following is a 130-amino-acid chain: Small ribosomal subunit protein uS11c (130 aa).

Belongs to the universal ribosomal protein uS11 family. As to quaternary structure, part of the 30S ribosomal subunit.

The protein resides in the plastid. It localises to the chloroplast. This is Small ribosomal subunit protein uS11c from Psilotum nudum (Whisk fern).